Reading from the N-terminus, the 128-residue chain is Aspartate 1-decarboxylase (128 aa).

Ser25 serves as the catalytic Schiff-base intermediate with substrate; via pyruvic acid. Ser25 carries the pyruvic acid (Ser) modification. Thr57 provides a ligand contact to substrate. Residue Tyr58 is the Proton donor of the active site. 73–75 contacts substrate; the sequence is GSA.

This sequence belongs to the PanD family. In terms of assembly, heterooctamer of four alpha and four beta subunits. The cofactor is pyruvate. Post-translationally, is synthesized initially as an inactive proenzyme, which is activated by self-cleavage at a specific serine bond to produce a beta-subunit with a hydroxyl group at its C-terminus and an alpha-subunit with a pyruvoyl group at its N-terminus.

Its subcellular location is the cytoplasm. It catalyses the reaction L-aspartate + H(+) = beta-alanine + CO2. It participates in cofactor biosynthesis; (R)-pantothenate biosynthesis; beta-alanine from L-aspartate: step 1/1. Catalyzes the pyruvoyl-dependent decarboxylation of aspartate to produce beta-alanine. This is Aspartate 1-decarboxylase from Burkholderia cenocepacia (strain ATCC BAA-245 / DSM 16553 / LMG 16656 / NCTC 13227 / J2315 / CF5610) (Burkholderia cepacia (strain J2315)).